The primary structure comprises 360 residues: tRNA (guanine(37)-N(1))-methyltransferase (360 aa).

S-adenosyl-L-methionine-binding positions include Arg-197, Asp-235–Leu-236, and Asn-283.

This sequence belongs to the class I-like SAM-binding methyltransferase superfamily. TRM5/TYW2 family. In terms of assembly, monomer.

Its subcellular location is the mitochondrion matrix. The protein localises to the nucleus. It localises to the cytoplasm. The enzyme catalyses guanosine(37) in tRNA + S-adenosyl-L-methionine = N(1)-methylguanosine(37) in tRNA + S-adenosyl-L-homocysteine + H(+). Its function is as follows. Specifically methylates the N1 position of guanosine-37 in various cytoplasmic and mitochondrial tRNAs. Methylation is not dependent on the nature of the nucleoside 5' of the target nucleoside. This is the first step in the biosynthesis of wybutosine (yW), a modified base adjacent to the anticodon of tRNAs and required for accurate decoding. This is tRNA (guanine(37)-N(1))-methyltransferase from Encephalitozoon cuniculi (strain GB-M1) (Microsporidian parasite).